A 309-amino-acid chain; its full sequence is Cilia-and flagella-associated protein 96 (309 aa).

The disordered stretch occupies residues 225–251; the sequence is TVGNPFKPSSPGKKAGGMKAGTFDPYP.

This sequence belongs to the CFAP96 family.

It is found in the cytoplasm. The protein localises to the cytoskeleton. It localises to the microtubule organizing center. Its subcellular location is the centrosome. This is Cilia-and flagella-associated protein 96 (CFAP96) from Bos taurus (Bovine).